The primary structure comprises 460 residues: Nuclear distribution protein PAC1 (460 aa).

In terms of domain architecture, LisH spans 9 to 41; that stretch reads QAEELHKSIIAYLAANNLQDSANAMRTELGLGE. Residues 61-88 are a coiled coil; the sequence is TSVVRLQKKIMDLEAQTQTLQTELNSAT. Residues 82–92 are compositionally biased toward polar residues; the sequence is TELNSATPTSN. The segment at 82-105 is disordered; sequence TELNSATPTSNRRGDPSSWLPAGP. 7 WD repeats span residues 112–153, 155–195, 199–246, 249–288, 293–354, 355–394, and 399–456; these read SHRT…RTVK, HTKA…QNIR, GHDH…CVKT, GHAD…PEAK, GHEH…KTLI, GHDN…KCVK, and SHEH…MSLR. The segment at 414–433 is disordered; it reads IKDKGPGEETNGDVGTPKKA.

Belongs to the WD repeat LIS1/nudF family. As to quaternary structure, self-associates. Interacts with NDL1 and dynein.

The protein resides in the cytoplasm. It localises to the cytoskeleton. The protein localises to the spindle pole. In terms of biological role, positively regulates the activity of the minus-end directed microtubule motor protein dynein. May enhance dynein-mediated microtubule sliding by targeting dynein to the microtubule plus end. Required for nuclear migration during vegetative growth as well as development. Required for retrograde early endosome (EE) transport from the hyphal tip. Required for localization of dynein to the mitotic spindle poles. Recruits additional proteins to the dynein complex at SPBs. This Gibberella zeae (strain ATCC MYA-4620 / CBS 123657 / FGSC 9075 / NRRL 31084 / PH-1) (Wheat head blight fungus) protein is Nuclear distribution protein PAC1.